Here is a 156-residue protein sequence, read N- to C-terminus: Small ribosomal subunit protein uS7 (156 aa).

The protein belongs to the universal ribosomal protein uS7 family. Part of the 30S ribosomal subunit. Contacts proteins S9 and S11.

Its function is as follows. One of the primary rRNA binding proteins, it binds directly to 16S rRNA where it nucleates assembly of the head domain of the 30S subunit. Is located at the subunit interface close to the decoding center, probably blocks exit of the E-site tRNA. The sequence is that of Small ribosomal subunit protein uS7 from Desulfatibacillum aliphaticivorans.